The sequence spans 344 residues: Glycerol-3-phosphate dehydrogenase [NAD(P)+] (344 aa).

Positions 11, 12, 32, 33, and 106 each coordinate NADPH. Positions 106, 136, and 138 each coordinate sn-glycerol 3-phosphate. NADPH is bound at residue Ala140. Positions 192, 245, 255, 256, and 257 each coordinate sn-glycerol 3-phosphate. Lys192 acts as the Proton acceptor in catalysis. Arg256 is an NADPH binding site. Residues Val280 and Glu282 each contribute to the NADPH site.

This sequence belongs to the NAD-dependent glycerol-3-phosphate dehydrogenase family.

The protein resides in the cytoplasm. It catalyses the reaction sn-glycerol 3-phosphate + NAD(+) = dihydroxyacetone phosphate + NADH + H(+). The catalysed reaction is sn-glycerol 3-phosphate + NADP(+) = dihydroxyacetone phosphate + NADPH + H(+). The protein operates within membrane lipid metabolism; glycerophospholipid metabolism. Catalyzes the reduction of the glycolytic intermediate dihydroxyacetone phosphate (DHAP) to sn-glycerol 3-phosphate (G3P), the key precursor for phospholipid synthesis. This Geobacillus kaustophilus (strain HTA426) protein is Glycerol-3-phosphate dehydrogenase [NAD(P)+].